The chain runs to 516 residues: Probable metalloreductase AIM14 (516 aa).

A run of 7 helical transmembrane segments spans residues 18-38 (IGYG…LLLL), 64-84 (LHLP…YSVI), 97-117 (LSYV…YILS), 128-148 (HMWL…AFVI), 168-188 (LLGF…TGVI), 195-215 (SFYM…PVHA), and 217-237 (PGVA…HALA). One can recognise a Ferric oxidoreductase domain in the interval 94 to 207 (LGRLSYVLLF…MVHQINAFAI (114 aa)). In terms of domain architecture, FAD-binding FR-type spans 238–363 (RVSFCMSSAV…GGTGISLGLP (126 aa)).

Belongs to the ferric reductase (FRE) family. AIM14 subfamily.

Its subcellular location is the membrane. Probable cell surface metalloreductase. May be involved in iron or copper homeostasis. In Eremothecium gossypii (strain ATCC 10895 / CBS 109.51 / FGSC 9923 / NRRL Y-1056) (Yeast), this protein is Probable metalloreductase AIM14 (AIM14).